The following is a 164-amino-acid chain: Methyl-coenzyme M reductase I operon protein D (164 aa).

MCR is composed of three subunits: alpha, beta, and gamma. The function of proteins C and D is not known.

This Methanocaldococcus jannaschii (strain ATCC 43067 / DSM 2661 / JAL-1 / JCM 10045 / NBRC 100440) (Methanococcus jannaschii) protein is Methyl-coenzyme M reductase I operon protein D (mcrD).